A 417-amino-acid chain; its full sequence is Cyanophycinase (417 aa).

An N-terminal signal peptide occupies residues 1 to 23 (MIRSFIRSSALLLALLPVTGYSA). Residues S169, D188, and H222 each act as charge relay system in the active site.

Belongs to the peptidase S51 family.

Its subcellular location is the secreted. It carries out the reaction [L-4-(L-arginin-2-N-yl)aspartate](n) + H2O = [L-4-(L-arginin-2-N-yl)aspartate](n-1) + L-4-(L-arginin-2-N-yl)aspartate. With respect to regulation, inhibited by serine protease inhibitors. Inhibited by N-Bromo-succinimide. In terms of biological role, exopeptidase that catalyzes the hydrolytic cleavage of multi-L-arginyl-poly-L-aspartic acid (cyanophycin; a water-insoluble reserve polymer) into aspartate-arginine dipeptides. The polypeptide is Cyanophycinase (cphE) (Pseudomonas anguilliseptica).